The following is a 236-amino-acid chain: MPAYKRVLLKLSGEALMGDDAFGINRATIEGMVNDIAEIVKLGVQVAVVIGGGNIFRGVAGGAAGMDRATADYMGMLATMMNALALQDAMRHASIEGRVQSALRMDQVVEPYIRPRAIRQLEEGKVVIFAAGTGNPFFTTDTAAALRGSEIGAEIVLKATKVDGVYTADPKKDPSATRYTTISFDEAISRNLQVMDATAFALCRDQKLPIKVFSIVKPGALKRVILGEDEGTLVHV.

10–13 (KLSG) contacts ATP. Residue Gly-52 coordinates UMP. ATP-binding residues include Gly-53 and Arg-57. Residues Asp-72 and 133-140 (TGNPFFTT) each bind UMP. 3 residues coordinate ATP: Thr-160, Tyr-166, and Asp-169.

This sequence belongs to the UMP kinase family. As to quaternary structure, homohexamer.

It localises to the cytoplasm. The enzyme catalyses UMP + ATP = UDP + ADP. Its pathway is pyrimidine metabolism; CTP biosynthesis via de novo pathway; UDP from UMP (UMPK route): step 1/1. Inhibited by UTP. Catalyzes the reversible phosphorylation of UMP to UDP. This Cupriavidus metallidurans (strain ATCC 43123 / DSM 2839 / NBRC 102507 / CH34) (Ralstonia metallidurans) protein is Uridylate kinase.